Here is an 851-residue protein sequence, read N- to C-terminus: MKNNDKLDSHTPMMQQYLRLKAQHPEILLFYRMGDFYELFYSDAKRASQLLDISLTKRGASAGEPIPMAGVPYHSIENYLAKLVQLGESAAICEQIGDPATSKGPVERKVVRIVTPGTISDEALLQERQDNLLAAIWQDAKGFGYATLDISSGRFRVAEPADLETMAAELQRTNPAELLYPENFEPMSLIEHRHGLRRRPLWEFELDTAKQQLNLQFGTRDLIGFGVEQAHLALRAAGCLLQYVKDTQRTSLPHIRGLTMERQQDGIIMDAATRRNLELTQNLSGGSENTLAAILDCSVTPMGSRMLKRWLHMPIRDIRVLTDRQQAIGGLQDIAAELQTPLRQVGDLERILARLALRTARPRDLARMRHAFQQLPEIHRLLQPIDVPHVQNLLSQVGQFDELQDLLERAIVETPPVLVRDGGVIASGYNAELDEWRALADGATDYLDRLEIREREKLGLDTLKVGFNGVHGYYIQVSRGQSHLVPIHYVRRQTLKNAERYIIPELKEYEDKVLTSKGKALAIEKGLYEEIFDLLLPHLPELQLSANALAELDVLANLAERAETLNYSCPTLSDKPGIKIMGGRHPVVEQVLKEPFISNPLTLSPQRRMLIITGPNMGGKSTYMRQTALIVLLAHLGSYVPADQATIGPIDRIFTRVGAADDLASGRSTFMVEMTETANILHNATEQSLVLMDEIGRGTSTYDGLSLAWACAENLASRIKAMTLFATHYFELTTLPEKMEGVANVHLDALEHGETIAFMHSVQEGAASKSYGLAVAALAGVPRDVIKRARQKLKELESLSNNAAASTIDGSQMTLLNEEIPPAVEALEALDPDSLSPRQALEWIYRLKNMV.

614–621 is a binding site for ATP; it reads GPNMGGKS.

Belongs to the DNA mismatch repair MutS family.

Its function is as follows. This protein is involved in the repair of mismatches in DNA. It is possible that it carries out the mismatch recognition step. This protein has a weak ATPase activity. The sequence is that of DNA mismatch repair protein MutS from Yersinia pseudotuberculosis serotype O:1b (strain IP 31758).